The sequence spans 95 residues: Acyl carrier protein AcpXL (95 aa).

One can recognise a Carrier domain in the interval 4–90 (TATFDKVADI…NLCAKIDELR (87 aa)). Serine 39 carries the O-(pantetheine 4'-phosphoryl)serine modification.

Post-translationally, 4'-phosphopantetheine is transferred from CoA to a specific serine of apo-ACP by AcpS. This modification is essential for activity because fatty acids are bound in thioester linkage to the sulfhydryl of the prosthetic group.

It is found in the cytoplasm. It participates in glycolipid biosynthesis; KDO(2)-lipid A biosynthesis. Functionally, carrier of the growing fatty acid chain in fatty acid biosynthesis. Is involved in the transfer of long hydroxylated fatty acids to lipid A. The polypeptide is Acyl carrier protein AcpXL (acpXL) (Rhizobium meliloti (strain 1021) (Ensifer meliloti)).